The chain runs to 241 residues: 2-C-methyl-D-erythritol 4-phosphate cytidylyltransferase (241 aa).

The protein belongs to the IspD/TarI cytidylyltransferase family. IspD subfamily.

It carries out the reaction 2-C-methyl-D-erythritol 4-phosphate + CTP + H(+) = 4-CDP-2-C-methyl-D-erythritol + diphosphate. Its pathway is isoprenoid biosynthesis; isopentenyl diphosphate biosynthesis via DXP pathway; isopentenyl diphosphate from 1-deoxy-D-xylulose 5-phosphate: step 2/6. In terms of biological role, catalyzes the formation of 4-diphosphocytidyl-2-C-methyl-D-erythritol from CTP and 2-C-methyl-D-erythritol 4-phosphate (MEP). This chain is 2-C-methyl-D-erythritol 4-phosphate cytidylyltransferase, found in Alkaliphilus metalliredigens (strain QYMF).